A 308-amino-acid chain; its full sequence is Ribosomal RNA large subunit methyltransferase F (308 aa).

This sequence belongs to the methyltransferase superfamily. METTL16/RlmF family.

It is found in the cytoplasm. The enzyme catalyses adenosine(1618) in 23S rRNA + S-adenosyl-L-methionine = N(6)-methyladenosine(1618) in 23S rRNA + S-adenosyl-L-homocysteine + H(+). In terms of biological role, specifically methylates the adenine in position 1618 of 23S rRNA. The protein is Ribosomal RNA large subunit methyltransferase F of Salmonella arizonae (strain ATCC BAA-731 / CDC346-86 / RSK2980).